Consider the following 234-residue polypeptide: PHD finger protein ING1 (234 aa).

The interval 129–166 (NNGKAGNAGEGGRGGRKKTRLATAASTAAASTGMTSSN) is disordered. Residues 149 to 165 (LATAASTAAASTGMTSS) show a composition bias toward low complexity. Residues 178-227 (PTYCICNQVSFGEMVACDNNACKIEWFHFGCVGLKEQPKGKWYCPECATV) form a PHD-type zinc finger. Residues C181, C183, C194, C199, H205, C208, C221, and C224 each coordinate Zn(2+).

The protein belongs to the ING family. Interacts with H3K4me3 and to a lesser extent with H3K4me2. In terms of tissue distribution, ubiquitously expressed.

Its subcellular location is the nucleus. Histone-binding component that specifically recognizes H3 tails trimethylated on 'Lys-4' (H3K4me3), which mark transcription start sites of virtually all active genes. This is PHD finger protein ING1 (ING1) from Arabidopsis thaliana (Mouse-ear cress).